Here is a 165-residue protein sequence, read N- to C-terminus: Large ribosomal subunit protein uL11A (165 aa).

At proline 2 the chain carries N,N-dimethylproline; by NTM1. 2 positions are modified to N6,N6,N6-trimethyllysine; by RKM2: lysine 4 and lysine 11. Phosphoserine is present on residues serine 25 and serine 38. Arginine 67 carries the N5-methylarginine; by RMT2 modification. Glycyl lysine isopeptide (Lys-Gly) (interchain with G-Cter in ubiquitin) cross-links involve residues lysine 130 and lysine 146.

It belongs to the universal ribosomal protein uL11 family. As to quaternary structure, component of the large ribosomal subunit (LSU). Mature yeast ribosomes consist of a small (40S) and a large (60S) subunit. The 40S small subunit contains 1 molecule of ribosomal RNA (18S rRNA) and 33 different proteins (encoded by 57 genes). The large 60S subunit contains 3 rRNA molecules (25S, 5.8S and 5S rRNA) and 46 different proteins (encoded by 81 genes). It appears that the main modified species for L12 contains 6 methyl groups, 2 on Pro-2, 3 on Lys-4 and 1 on Arg-67. Although not reproduced with a second method, methylation at Lys-11 cannot be ruled out.

The protein resides in the cytoplasm. Its function is as follows. Component of the ribosome, a large ribonucleoprotein complex responsible for the synthesis of proteins in the cell. The small ribosomal subunit (SSU) binds messenger RNAs (mRNAs) and translates the encoded message by selecting cognate aminoacyl-transfer RNA (tRNA) molecules. The large subunit (LSU) contains the ribosomal catalytic site termed the peptidyl transferase center (PTC), which catalyzes the formation of peptide bonds, thereby polymerizing the amino acids delivered by tRNAs into a polypeptide chain. The nascent polypeptides leave the ribosome through a tunnel in the LSU and interact with protein factors that function in enzymatic processing, targeting, and the membrane insertion of nascent chains at the exit of the ribosomal tunnel. The polypeptide is Large ribosomal subunit protein uL11A (Saccharomyces cerevisiae (strain ATCC 204508 / S288c) (Baker's yeast)).